The primary structure comprises 195 residues: dTTP/UTP pyrophosphatase (195 aa).

Asp-73 (proton acceptor) is an active-site residue.

Belongs to the Maf family. YhdE subfamily. A divalent metal cation is required as a cofactor.

The protein localises to the cytoplasm. The catalysed reaction is dTTP + H2O = dTMP + diphosphate + H(+). It catalyses the reaction UTP + H2O = UMP + diphosphate + H(+). In terms of biological role, nucleoside triphosphate pyrophosphatase that hydrolyzes dTTP and UTP. May have a dual role in cell division arrest and in preventing the incorporation of modified nucleotides into cellular nucleic acids. This Exiguobacterium sibiricum (strain DSM 17290 / CCUG 55495 / CIP 109462 / JCM 13490 / 255-15) protein is dTTP/UTP pyrophosphatase.